The following is a 266-amino-acid chain: HLA class II histocompatibility antigen, DR beta 5 chain (266 aa).

A signal peptide spans methionine 1–alanine 29. The tract at residues glycine 30–valine 124 is beta-1. At glycine 30–lysine 227 the chain is on the extracellular side. 2 disulfide bridges follow: cysteine 44–cysteine 108 and cysteine 146–cysteine 202. Asparagine 48 carries N-linked (GlcNAc...) asparagine glycosylation. Residues glutamate 125–lysine 227 are beta-2. Residues proline 126–threonine 214 enclose the Ig-like C1-type domain. The chain crosses the membrane as a helical span at residues methionine 228–isoleucine 248. The Cytoplasmic segment spans residues tyrosine 249–serine 266.

The protein belongs to the MHC class II family. In terms of assembly, heterodimer of an alpha and a beta subunit; also referred as MHC class II molecule. In the endoplasmic reticulum (ER) it forms a heterononamer; 3 MHC class II molecules bind to a CD74 homotrimer (also known as invariant chain or HLA class II histocompatibility antigen gamma chain). In the endosomal/lysosomal system; CD74 undergoes sequential degradation by various proteases; leaving a small fragment termed CLIP on each MHC class II molecule. MHC class II molecule interacts with HLA_DM, and HLA_DO in B-cells, in order to release CLIP and facilitate the binding of antigenic peptides. In terms of processing, ubiquitinated by MARCH1 and MARCH8 at Lys-254 leading to down-regulation of MHC class II.

Its subcellular location is the cell membrane. The protein localises to the endoplasmic reticulum membrane. The protein resides in the golgi apparatus. It is found in the trans-Golgi network membrane. It localises to the endosome membrane. Its subcellular location is the lysosome membrane. The protein localises to the late endosome membrane. Binds peptides derived from antigens that access the endocytic route of antigen presenting cells (APC) and presents them on the cell surface for recognition by the CD4 T-cells. The peptide binding cleft accommodates peptides of 10-30 residues. The peptides presented by MHC class II molecules are generated mostly by degradation of proteins that access the endocytic route, where they are processed by lysosomal proteases and other hydrolases. Exogenous antigens that have been endocytosed by the APC are thus readily available for presentation via MHC II molecules, and for this reason this antigen presentation pathway is usually referred to as exogenous. As membrane proteins on their way to degradation in lysosomes as part of their normal turn-over are also contained in the endosomal/lysosomal compartments, exogenous antigens must compete with those derived from endogenous components. Autophagy is also a source of endogenous peptides, autophagosomes constitutively fuse with MHC class II loading compartments. In addition to APCs, other cells of the gastrointestinal tract, such as epithelial cells, express MHC class II molecules and CD74 and act as APCs, which is an unusual trait of the GI tract. To produce a MHC class II molecule that presents an antigen, three MHC class II molecules (heterodimers of an alpha and a beta chain) associate with a CD74 trimer in the ER to form a heterononamer. Soon after the entry of this complex into the endosomal/lysosomal system where antigen processing occurs, CD74 undergoes a sequential degradation by various proteases, including CTSS and CTSL, leaving a small fragment termed CLIP (class-II-associated invariant chain peptide). The removal of CLIP is facilitated by HLA-DM via direct binding to the alpha-beta-CLIP complex so that CLIP is released. HLA-DM stabilizes MHC class II molecules until primary high affinity antigenic peptides are bound. The MHC II molecule bound to a peptide is then transported to the cell membrane surface. In B-cells, the interaction between HLA-DM and MHC class II molecules is regulated by HLA-DO. Primary dendritic cells (DCs) also to express HLA-DO. Lysosomal microenvironment has been implicated in the regulation of antigen loading into MHC II molecules, increased acidification produces increased proteolysis and efficient peptide loading. The polypeptide is HLA class II histocompatibility antigen, DR beta 5 chain (Homo sapiens (Human)).